We begin with the raw amino-acid sequence, 522 residues long: 2-isopropylmalate synthase (522 aa).

In terms of domain architecture, Pyruvate carboxyltransferase spans Val5–His267. Asp14, His202, His204, and Asn238 together coordinate Mn(2+). Residues Gln392–Val522 are regulatory domain.

This sequence belongs to the alpha-IPM synthase/homocitrate synthase family. LeuA type 1 subfamily. In terms of assembly, homodimer. Mn(2+) serves as cofactor.

Its subcellular location is the cytoplasm. It carries out the reaction 3-methyl-2-oxobutanoate + acetyl-CoA + H2O = (2S)-2-isopropylmalate + CoA + H(+). Its pathway is amino-acid biosynthesis; L-leucine biosynthesis; L-leucine from 3-methyl-2-oxobutanoate: step 1/4. Its function is as follows. Catalyzes the condensation of the acetyl group of acetyl-CoA with 3-methyl-2-oxobutanoate (2-ketoisovalerate) to form 3-carboxy-3-hydroxy-4-methylpentanoate (2-isopropylmalate). This chain is 2-isopropylmalate synthase, found in Shewanella sp. (strain MR-4).